The primary structure comprises 773 residues: Pentatricopeptide repeat-containing protein At1g76280 (773 aa).

PPR repeat units lie at residues 130 to 165, 166 to 200, 201 to 231, 235 to 269, 332 to 369, 370 to 400, 402 to 436, 524 to 558, 559 to 593, 594 to 628, and 629 to 663; these read DSRSLLFIVKSLCNGGHLDKASEFIHAVREDDRISP, LLPIYNFFLGACARTRSVYHASKCLELMDQRRVGK, NGITYVALLKLAVFQRNLSTVNDIWKHYVNH, DILSLRRFIWSFTRLGDLKSAYELLQHMVYLALRG, LRWSFNDVIHACGQSKNSELAEQLMLQLKVMQQQNLKP, YDSTLATVAAYCSKALQVDLAEHLLDQISEC, YSYPFNNLLAAYDSLDQPERAVRVLARMKELKLRP, GTPTYNIVLHSLLEANETDMVINIFKRMKSCGCPA, DVATYNIMIDCCSLIHSYKSACALVSMMIRDGFSP, KAVTFTALMKILLNDANFEEALNLLDQAALEEIHL, and DVLSYNTILRKAFEKGMIDVIEYIVEQMHREKVNP.

It belongs to the PPR family. P subfamily.

The sequence is that of Pentatricopeptide repeat-containing protein At1g76280 from Arabidopsis thaliana (Mouse-ear cress).